The sequence spans 504 residues: MSKKALLMILDGWGLGDHGKDDVIFNTATPYWDYLMETYPHSQLQASGENVGLPDGQMGNSEVGHLNIGAGRVVYQDLVKINLSCRDNSILKNPEIVSAFSYAKENGKNVHFMGLTSDGGVHSSLDHLFKLCDIAKEYNIENTFVHCFMDGRDTDPKSGKGFIEQLEAHCAKSAGKVASIIGRYYAMDRDKRWERVKEAYDLLVNGIGKKATDMVQAMQESYDEGVTDEFIKPIVNAGVDGTIKEGDVVIFFNYRNDRAKELTVVLTQQDMPEAGMHTIPGLQYYCMTPYDASFKGVHILFDKENVVNTLGEYLAANGKKQLHIAETEKYAHVTFFFNGGRETPYDNEDRILVPSPKVATYDLKPEMSAYEVKDKLVAAINENKYDFIVVNYANGDMVGHTGIYEAIEKAVVAVDACVKDTIEAAKAQGYEAIIIADHGNADHALNEDGTPNTAHSLNPVPCVYVTENKEAKVADGRLADVAPTILHILDMVQPAEMTGCNLIK.

Residues Asp-11 and Ser-61 each coordinate Mn(2+). The active-site Phosphoserine intermediate is the Ser-61. Substrate is bound by residues His-122, Arg-152–Asp-153, Arg-183, Arg-189, Arg-255–Arg-258, and Lys-329. The Mn(2+) site is built by Asp-396, His-400, Asp-437, His-438, and His-455.

This sequence belongs to the BPG-independent phosphoglycerate mutase family. In terms of assembly, monomer. Mn(2+) is required as a cofactor.

It catalyses the reaction (2R)-2-phosphoglycerate = (2R)-3-phosphoglycerate. It participates in carbohydrate degradation; glycolysis; pyruvate from D-glyceraldehyde 3-phosphate: step 3/5. In terms of biological role, catalyzes the interconversion of 2-phosphoglycerate and 3-phosphoglycerate. The polypeptide is 2,3-bisphosphoglycerate-independent phosphoglycerate mutase (Bacteroides fragilis (strain ATCC 25285 / DSM 2151 / CCUG 4856 / JCM 11019 / LMG 10263 / NCTC 9343 / Onslow / VPI 2553 / EN-2)).